A 594-amino-acid chain; its full sequence is Aspartate--tRNA(Asp/Asn) ligase (594 aa).

Residue Glu-175 participates in L-aspartate binding. Residues 199-202 (QLFK) are aspartate. Residue Arg-221 coordinates L-aspartate. Residues 221 to 223 (RDE) and Gln-230 each bind ATP. His-446 serves as a coordination point for L-aspartate. Glu-492 is an ATP binding site. Arg-499 lines the L-aspartate pocket. 544–547 (GFDR) is an ATP binding site.

It belongs to the class-II aminoacyl-tRNA synthetase family. Type 1 subfamily. As to quaternary structure, homodimer.

The protein localises to the cytoplasm. It catalyses the reaction tRNA(Asx) + L-aspartate + ATP = L-aspartyl-tRNA(Asx) + AMP + diphosphate. In terms of biological role, aspartyl-tRNA synthetase with relaxed tRNA specificity since it is able to aspartylate not only its cognate tRNA(Asp) but also tRNA(Asn). Reaction proceeds in two steps: L-aspartate is first activated by ATP to form Asp-AMP and then transferred to the acceptor end of tRNA(Asp/Asn). The chain is Aspartate--tRNA(Asp/Asn) ligase from Hydrogenobaculum sp. (strain Y04AAS1).